A 199-amino-acid polypeptide reads, in one-letter code: Charged multivesicular body protein 1b (199 aa).

2 coiled-coil regions span residues 10-30 (NLKF…KEEK) and 178-199 (TSVA…RDQV). The segment at 167-199 (ELPQGQTGSVGTSVASAEQDELSQRLAKLRDQV) is disordered. The span at 170 to 182 (QGQTGSVGTSVAS) shows a compositional bias: polar residues. Positions 186-196 (DELSQRLAKLR) match the MIT-interacting motif motif.

Belongs to the SNF7 family. Probable peripherally associated component of the endosomal sorting required for transport complex III (ESCRT-III).

The protein resides in the cytoplasm. Its subcellular location is the cytosol. It is found in the endosome. The protein localises to the late endosome membrane. Functionally, probable peripherally associated component of the endosomal sorting required for transport complex III (ESCRT-III) which is involved in multivesicular bodies (MVBs) formation and sorting of endosomal cargo proteins into MVBs. MVBs contain intraluminal vesicles (ILVs) that are generated by invagination and scission from the limiting membrane of the endosome and mostly are delivered to lysosomes enabling degradation of membrane proteins, such as stimulated growth factor receptors, lysosomal enzymes and lipids. The polypeptide is Charged multivesicular body protein 1b (chmp1b) (Danio rerio (Zebrafish)).